We begin with the raw amino-acid sequence, 177 residues long: Large ribosomal subunit protein uL10 (177 aa).

Belongs to the universal ribosomal protein uL10 family. In terms of assembly, part of the ribosomal stalk of the 50S ribosomal subunit. The N-terminus interacts with L11 and the large rRNA to form the base of the stalk. The C-terminus forms an elongated spine to which L12 dimers bind in a sequential fashion forming a multimeric L10(L12)X complex.

Its function is as follows. Forms part of the ribosomal stalk, playing a central role in the interaction of the ribosome with GTP-bound translation factors. The sequence is that of Large ribosomal subunit protein uL10 from Leptospira borgpetersenii serovar Hardjo-bovis (strain JB197).